Consider the following 259-residue polypeptide: NAD kinase (259 aa).

D43 serves as the catalytic Proton acceptor. Residues 43–44, 111–112, and R136 each bind NAD(+); these read DG and NE.

It belongs to the NAD kinase family. Requires a divalent metal cation as cofactor.

It is found in the cytoplasm. It carries out the reaction NAD(+) + ATP = ADP + NADP(+) + H(+). In terms of biological role, involved in the regulation of the intracellular balance of NAD and NADP, and is a key enzyme in the biosynthesis of NADP. Catalyzes specifically the phosphorylation on 2'-hydroxyl of the adenosine moiety of NAD to yield NADP. This chain is NAD kinase, found in Mycoplasma genitalium (strain ATCC 33530 / DSM 19775 / NCTC 10195 / G37) (Mycoplasmoides genitalium).